Reading from the N-terminus, the 307-residue chain is Homoserine kinase (307 aa).

Residue 85–95 (PLTRGLGSSAA) participates in ATP binding.

This sequence belongs to the GHMP kinase family. Homoserine kinase subfamily.

Its subcellular location is the cytoplasm. It catalyses the reaction L-homoserine + ATP = O-phospho-L-homoserine + ADP + H(+). It participates in amino-acid biosynthesis; L-threonine biosynthesis; L-threonine from L-aspartate: step 4/5. In terms of biological role, catalyzes the ATP-dependent phosphorylation of L-homoserine to L-homoserine phosphate. The protein is Homoserine kinase of Caldicellulosiruptor bescii (strain ATCC BAA-1888 / DSM 6725 / KCTC 15123 / Z-1320) (Anaerocellum thermophilum).